The following is a 365-amino-acid chain: Peptide chain release factor 1 (365 aa).

Gln236 carries the post-translational modification N5-methylglutamine.

This sequence belongs to the prokaryotic/mitochondrial release factor family. In terms of processing, methylated by PrmC. Methylation increases the termination efficiency of RF1.

The protein resides in the cytoplasm. Functionally, peptide chain release factor 1 directs the termination of translation in response to the peptide chain termination codons UAG and UAA. In Latilactobacillus sakei subsp. sakei (strain 23K) (Lactobacillus sakei subsp. sakei), this protein is Peptide chain release factor 1.